Here is a 320-residue protein sequence, read N- to C-terminus: NAD kinase (320 aa).

Catalysis depends on Asp-96, which acts as the Proton acceptor. Residues 96–97, Arg-101, 170–171, Asp-200, and 211–216 contribute to the NAD(+) site; these read DG, NE, and TAYAFS.

The protein belongs to the NAD kinase family. A divalent metal cation serves as cofactor.

It is found in the cytoplasm. It catalyses the reaction NAD(+) + ATP = ADP + NADP(+) + H(+). Involved in the regulation of the intracellular balance of NAD and NADP, and is a key enzyme in the biosynthesis of NADP. Catalyzes specifically the phosphorylation on 2'-hydroxyl of the adenosine moiety of NAD to yield NADP. This Rhodococcus opacus (strain B4) protein is NAD kinase.